The sequence spans 149 residues: UPF0178 protein VFMJ11_0615 (149 aa).

Belongs to the UPF0178 family.

The sequence is that of UPF0178 protein VFMJ11_0615 from Aliivibrio fischeri (strain MJ11) (Vibrio fischeri).